A 498-amino-acid polypeptide reads, in one-letter code: Cytochrome P450 71D15 (498 aa).

Residues leucine 3–isoleucine 23 form a helical; Signal-anchor for type II membrane protein membrane-spanning segment. A heme-binding site is contributed by cysteine 437.

The protein belongs to the cytochrome P450 family. Heme is required as a cofactor.

The protein resides in the endoplasmic reticulum membrane. The enzyme catalyses (4S)-limonene + reduced [NADPH--hemoprotein reductase] + O2 = (1S,6R)-isopiperitenol + oxidized [NADPH--hemoprotein reductase] + H2O + H(+). Functionally, hydroxylates (-)-(4S)-limonene to (-)-trans-isopiperitenol, a precursor of (-)-menthol, responsible for the cooling sensation of peppermint. Fluorinated substrate analogs are hydroxylated with the same regio- and stereochemistry. In Mentha piperita (Peppermint), this protein is Cytochrome P450 71D15 (CYP71D15).